We begin with the raw amino-acid sequence, 286 residues long: Transcription initiation factor IIA large subunit (286 aa).

Disordered stretches follow at residues 120–145, 167–195, and 208–236; these read NTVE…ADVT, TVEN…KEKE, and KRSA…EGEE. Over residues 175 to 195 the composition is skewed to basic and acidic residues; the sequence is SEKKDDEEKEEDVEKTRKEKE. Over residues 214–236 the composition is skewed to acidic residues; that stretch reads DTDEVGSELDDSDDDYLISEGEE.

The protein belongs to the TFIIA subunit 1 family. TFIIA is a heterodimer composed of the large TOA1 and a small TOA2 subunits. Interacts with KAP122.

It localises to the cytoplasm. It is found in the nucleus. Functionally, TFIIA is a component of the transcription machinery of RNA polymerase II and implicated in the regulation of basal transcription. Interacts with TBP (the TATA-binding protein). The protein is Transcription initiation factor IIA large subunit (TOA1) of Saccharomyces cerevisiae (strain ATCC 204508 / S288c) (Baker's yeast).